Consider the following 191-residue polypeptide: Ribosome maturation factor RimM (191 aa).

Residues 114-191 (EDEYYWVDLI…RIVVDWQPDY (78 aa)) enclose the PRC barrel domain.

The protein belongs to the RimM family. As to quaternary structure, binds ribosomal protein uS19.

Its subcellular location is the cytoplasm. Its function is as follows. An accessory protein needed during the final step in the assembly of 30S ribosomal subunit, possibly for assembly of the head region. Essential for efficient processing of 16S rRNA. May be needed both before and after RbfA during the maturation of 16S rRNA. It has affinity for free ribosomal 30S subunits but not for 70S ribosomes. In Paracidovorax citrulli (strain AAC00-1) (Acidovorax citrulli), this protein is Ribosome maturation factor RimM.